We begin with the raw amino-acid sequence, 315 residues long: Ribosomal RNA small subunit methyltransferase H (315 aa).

S-adenosyl-L-methionine contacts are provided by residues 37–39 (GGH), aspartate 57, phenylalanine 83, aspartate 105, and glutamine 112.

It belongs to the methyltransferase superfamily. RsmH family.

It localises to the cytoplasm. The catalysed reaction is cytidine(1402) in 16S rRNA + S-adenosyl-L-methionine = N(4)-methylcytidine(1402) in 16S rRNA + S-adenosyl-L-homocysteine + H(+). Specifically methylates the N4 position of cytidine in position 1402 (C1402) of 16S rRNA. This chain is Ribosomal RNA small subunit methyltransferase H, found in Pseudomonas putida (strain ATCC 47054 / DSM 6125 / CFBP 8728 / NCIMB 11950 / KT2440).